Reading from the N-terminus, the 88-residue chain is Transmembrane protein 069R (88 aa).

The next 2 helical transmembrane spans lie at 30–50 (ALWPPALAYAASVAAGYVFTA) and 67–87 (VGVFLGVLCALYNWMGSGDSF).

It is found in the host membrane. The protein is Transmembrane protein 069R of Frog virus 3 (isolate Goorha) (FV-3).